A 204-amino-acid chain; its full sequence is Protease (204 aa).

Residues histidine 53, aspartate 70, and cysteine 121 contribute to the active site.

Belongs to the peptidase C5 family. As to quaternary structure, interacts with protease cofactor pVI-C; this interaction is necessary for protease activation.

The protein resides in the virion. The protein localises to the host nucleus. The catalysed reaction is Cleaves proteins of the adenovirus and its host cell at two consensus sites: -Yaa-Xaa-Gly-Gly-|-Xaa- and -Yaa-Xaa-Gly-Xaa-|-Gly- (in which Yaa is Met, Ile or Leu, and Xaa is any amino acid).. Requires DNA and protease cofactor for maximal activation. Inside nascent virions, becomes partially activated by binding to the viral DNA, allowing it to cleave the cofactor that binds to the protease and fully activates it. Actin, like the viral protease cofactor, seems to act as a cofactor in the cleavage of cytokeratin 18 and of actin itself. Cleaves viral precursor proteins (pTP, pIIIa, pVI, pVII, pVIII, and pX) inside newly assembled particles giving rise to mature virions. Protease complexed to its cofactor slides along the viral DNA to specifically locate and cleave the viral precursors. Mature virions have a weakened organization compared to the unmature virions, thereby facilitating subsequent uncoating. Without maturation, the particle lacks infectivity and is unable to uncoat. Late in adenovirus infection, in the cytoplasm, may participate in the cytoskeleton destruction. Cleaves host cell cytoskeletal keratins K7 and K18. The chain is Protease from Porcine adenovirus A serotype 3 (PAdV-3).